The sequence spans 184 residues: Putative manganese efflux pump MntP (184 aa).

6 consecutive transmembrane segments (helical) span residues 3 to 23, 36 to 56, 65 to 85, 103 to 123, 126 to 146, and 163 to 183; these read LLSMVLIGVGLAMDAFSISVS, ALISALSFGTFQAAMPVLGWV, VSALAPWAAFILLLIIGLKMI, LLVLSIATSIDAFAVGVSFAL, ISIWLPVIVIGLITFILSLAG, and ALGGLILILIGLKILLENVSF.

Belongs to the MntP (TC 9.B.29) family.

It localises to the cell membrane. Probably functions as a manganese efflux pump. The protein is Putative manganese efflux pump MntP of Methanothermobacter thermautotrophicus (strain ATCC 29096 / DSM 1053 / JCM 10044 / NBRC 100330 / Delta H) (Methanobacterium thermoautotrophicum).